The following is a 132-amino-acid chain: Small ribosomal subunit protein uS8c (132 aa).

It belongs to the universal ribosomal protein uS8 family. Part of the 30S ribosomal subunit.

The protein resides in the plastid. It localises to the chloroplast. In terms of biological role, one of the primary rRNA binding proteins, it binds directly to 16S rRNA central domain where it helps coordinate assembly of the platform of the 30S subunit. This chain is Small ribosomal subunit protein uS8c (rps8), found in Pinus thunbergii (Japanese black pine).